The chain runs to 185 residues: Protein GrpE (185 aa).

The segment covering 1–12 (MADEQLNEKDLN) has biased composition (basic and acidic residues). Positions 1-22 (MADEQLNEKDLNVEETGAGNAA) are disordered.

This sequence belongs to the GrpE family. In terms of assembly, homodimer.

It localises to the cytoplasm. Its function is as follows. Participates actively in the response to hyperosmotic and heat shock by preventing the aggregation of stress-denatured proteins, in association with DnaK and GrpE. It is the nucleotide exchange factor for DnaK and may function as a thermosensor. Unfolded proteins bind initially to DnaJ; upon interaction with the DnaJ-bound protein, DnaK hydrolyzes its bound ATP, resulting in the formation of a stable complex. GrpE releases ADP from DnaK; ATP binding to DnaK triggers the release of the substrate protein, thus completing the reaction cycle. Several rounds of ATP-dependent interactions between DnaJ, DnaK and GrpE are required for fully efficient folding. The sequence is that of Protein GrpE from Pseudomonas putida (strain ATCC 700007 / DSM 6899 / JCM 31910 / BCRC 17059 / LMG 24140 / F1).